Consider the following 105-residue polypeptide: uncharacterized protein (105 aa).

Positions Gly-22 to Met-105 are disordered. The span at His-61–Arg-83 shows a compositional bias: basic and acidic residues. The segment covering Asn-93–Met-105 has biased composition (basic residues).

This is an uncharacterized protein from Escherichia coli (strain K12).